We begin with the raw amino-acid sequence, 341 residues long: METSIQQLQQEIDGYQIRNAKELEAFKLEFTVRKGKIAGLFGQLKTVDSADRPRIGQLLNALKLSAEAKVADAESLFAQNAETEAPALDLSLPGRRSFLGSEHPVQKVLGDMKRIFTAMGFGIATGPELELDEYNFDRLNFPPNHPARDMQDTFFITRGQEEGDVLLRTHTSPVQVRVMLDEKPPIRVICPGKVYRNEAISARSYCVFHQLEGLYIDKNVSFADLKATIYSFARQMFGSDVKLRFRPSFFPFTEPSAEVDVTCYLCGGKGCRVCKKSGWLEIMGCGMVHPNVMRNCGIDPEEWTGYAFGMGVDRTALLRYKIDDIRLFFENDVRMLSQFMA.

A Mg(2+)-binding site is contributed by glutamate 254.

The protein belongs to the class-II aminoacyl-tRNA synthetase family. Phe-tRNA synthetase alpha subunit type 1 subfamily. Tetramer of two alpha and two beta subunits. The cofactor is Mg(2+).

The protein localises to the cytoplasm. It catalyses the reaction tRNA(Phe) + L-phenylalanine + ATP = L-phenylalanyl-tRNA(Phe) + AMP + diphosphate + H(+). The sequence is that of Phenylalanine--tRNA ligase alpha subunit from Chlorobaculum tepidum (strain ATCC 49652 / DSM 12025 / NBRC 103806 / TLS) (Chlorobium tepidum).